A 249-amino-acid chain; its full sequence is 5'-nucleotidase SurE (249 aa).

A divalent metal cation is bound by residues aspartate 8, aspartate 9, serine 39, and asparagine 91.

The protein belongs to the SurE nucleotidase family. It depends on a divalent metal cation as a cofactor.

The protein resides in the cytoplasm. The enzyme catalyses a ribonucleoside 5'-phosphate + H2O = a ribonucleoside + phosphate. In terms of biological role, nucleotidase that shows phosphatase activity on nucleoside 5'-monophosphates. The chain is 5'-nucleotidase SurE from Haemophilus influenzae (strain ATCC 51907 / DSM 11121 / KW20 / Rd).